A 93-amino-acid chain; its full sequence is Defensin-like protein 210 (93 aa).

The first 19 residues, 1–19 (MKTIILFLTLLVISSSCTS), serve as a signal peptide directing secretion. 3 disulfides stabilise this stretch: Cys63–Cys80, Cys66–Cys85, and Cys70–Cys87.

It belongs to the DEFL family.

It localises to the secreted. The protein is Defensin-like protein 210 of Arabidopsis thaliana (Mouse-ear cress).